A 342-amino-acid chain; its full sequence is Protein rough sheath 2 homolog (342 aa).

HTH myb-type domains lie at 1-58 (MQPP…KNYL) and 59-113 (RPGI…EKQQ). 2 DNA-binding regions (H-T-H motif) span residues 32–58 (WSLV…KNYL) and 86–109 (WKKI…EVFK). Residues 253 to 304 (RRREATEEFEAKMRALREEQAAAVERVEAEYREKMAGLRRDAEAKEQKMAEQ) adopt a coiled-coil conformation.

The protein localises to the nucleus. Functionally, transcription factor required for normal cell differentiation. May interact with other proteins to repress the knox homeobox genes. The chain is Protein rough sheath 2 homolog (RS2) from Oryza sativa subsp. japonica (Rice).